A 162-amino-acid polypeptide reads, in one-letter code: Regulator of ribonuclease activity A (162 aa).

It belongs to the RraA family. In terms of assembly, homotrimer. Binds to both RNA-binding sites in the C-terminal region of Rne and to RhlB.

It localises to the cytoplasm. Its function is as follows. Globally modulates RNA abundance by binding to RNase E (Rne) and regulating its endonucleolytic activity. Can modulate Rne action in a substrate-dependent manner by altering the composition of the degradosome. Modulates RNA-binding and helicase activities of the degradosome. In Haemophilus influenzae (strain 86-028NP), this protein is Regulator of ribonuclease activity A.